Here is a 356-residue protein sequence, read N- to C-terminus: Mitogen-activated protein kinase PMK1 (356 aa).

The 289-residue stretch at 24-312 folds into the Protein kinase domain; it reads YDIQDVVGEG…VEEALKHPYL (289 aa). ATP is bound by residues 30–38 and Lys-53; that span reads VGEGAYGVV.

This sequence belongs to the protein kinase superfamily. CMGC Ser/Thr protein kinase family. MAP kinase subfamily. Mg(2+) is required as a cofactor. In terms of processing, phosphorylated by MST7.

The enzyme catalyses L-seryl-[protein] + ATP = O-phospho-L-seryl-[protein] + ADP + H(+). The catalysed reaction is L-threonyl-[protein] + ATP = O-phospho-L-threonyl-[protein] + ADP + H(+). Its function is as follows. Mitogen-activated protein kinase; part of the MST11-MST7-PMK1 MAP kinase (MAPK) cascade that is essential for appressorium formation, penetration and invasive growth. Central regulator of appressorium development that acts downstream of the cAMP signal. The MST11-MST7-PMK1 MAP kinase cascade transduces signals from the cell surface sensors MDB2 and SHO1 that recognize various surface signals such as surface hydrophobicity, cutin monomers, and rice leaf waxes. Regulates expression of secreted fungal effector proteins implicated of host immune defenses, preventing reactive oxygen species generation and excessive callose deposition at plasmodesmata. Furthermore, controls the hyphal constriction required for fungal growth from one rice cell to the neighboring cell, enabling host tissue colonization and blast disease. Targets downstream of the PMK1-MAPK pathway include transcription factor MST12 and pathogenicity-related genes GAS1 and GAS2, both of which are expressed during appressorium formation, even if regulation of MST12 is not associated with expression of GAS1 or GAS2. In Pyricularia oryzae (Rice blast fungus), this protein is Mitogen-activated protein kinase PMK1.